Consider the following 608-residue polypeptide: Phosphatidylinositol/phosphatidylcholine transfer protein SFH4 (608 aa).

Residues 1 to 33 (MSGPLDRFTSPCFSNNGEKREKKSDFEVSEDEK) are disordered. The segment covering 17 to 33 (GEKREKKSDFEVSEDEK) has biased composition (basic and acidic residues). The CRAL-TRIO domain maps to 146–320 (ELDEVLRYYP…FFGGTCTCAD (175 aa)). Residues 358–403 (DSQISSSDKPTYSLKVSDTSTAKSGSELEEMASPKTNTNNHVPKLT) form a disordered region. Positions 371–381 (LKVSDTSTAKS) are enriched in polar residues. A coiled-coil region spans residues 526-572 (ISSVLSRLGDLEKQIENLHSRKSEMPHEKEELLNAAVYRVDALEAEL).

The protein belongs to the SFH family.

The protein resides in the golgi apparatus membrane. Its subcellular location is the cell membrane. Its function is as follows. Required for transport of secretory proteins from the Golgi complex. Catalyzes the transfer of phosphatidylinositol and phosphatidylcholine between membranes in vitro. In Arabidopsis thaliana (Mouse-ear cress), this protein is Phosphatidylinositol/phosphatidylcholine transfer protein SFH4 (SFH4).